Reading from the N-terminus, the 652-residue chain is DNA ligase (652 aa).

NAD(+) contacts are provided by residues 29 to 33 (DSDYD), 78 to 79 (SL), and glutamate 107. Lysine 109 (N6-AMP-lysine intermediate) is an active-site residue. NAD(+) contacts are provided by arginine 130, glutamate 164, lysine 278, and lysine 302. The Zn(2+) site is built by cysteine 395, cysteine 398, cysteine 413, and cysteine 418. Positions 577–652 (NSDAALFGLT…IEDEDWLRQL (76 aa)) constitute a BRCT domain.

It belongs to the NAD-dependent DNA ligase family. LigA subfamily. Mg(2+) is required as a cofactor. It depends on Mn(2+) as a cofactor.

It catalyses the reaction NAD(+) + (deoxyribonucleotide)n-3'-hydroxyl + 5'-phospho-(deoxyribonucleotide)m = (deoxyribonucleotide)n+m + AMP + beta-nicotinamide D-nucleotide.. Functionally, DNA ligase that catalyzes the formation of phosphodiester linkages between 5'-phosphoryl and 3'-hydroxyl groups in double-stranded DNA using NAD as a coenzyme and as the energy source for the reaction. It is essential for DNA replication and repair of damaged DNA. This chain is DNA ligase, found in Streptococcus pyogenes serotype M3 (strain ATCC BAA-595 / MGAS315).